The chain runs to 190 residues: Tegument antigen (190 aa).

EF-hand domains are found at residues 8–43 and 51–77; these read SQMEEFIRAFLEIDADSNEMIDKQELIKYCQKYRLD and IARFDTDKDNKISIEEFCRGFGLKVSE. Ca(2+) is bound by residues aspartate 55, aspartate 57, aspartate 59, lysine 61, and glutamate 66.

In terms of tissue distribution, adult and schistosomula tegument.

The polypeptide is Tegument antigen (Schistosoma mansoni (Blood fluke)).